Here is a 196-residue protein sequence, read N- to C-terminus: ATP-dependent Clp protease proteolytic subunit (196 aa).

The Nucleophile role is filled by serine 101. The active site involves histidine 126.

The protein belongs to the peptidase S14 family. As to quaternary structure, component of the chloroplastic Clp protease core complex.

The protein resides in the plastid. It localises to the chloroplast stroma. The catalysed reaction is Hydrolysis of proteins to small peptides in the presence of ATP and magnesium. alpha-casein is the usual test substrate. In the absence of ATP, only oligopeptides shorter than five residues are hydrolyzed (such as succinyl-Leu-Tyr-|-NHMec, and Leu-Tyr-Leu-|-Tyr-Trp, in which cleavage of the -Tyr-|-Leu- and -Tyr-|-Trp bonds also occurs).. Its function is as follows. Cleaves peptides in various proteins in a process that requires ATP hydrolysis. Has a chymotrypsin-like activity. Plays a major role in the degradation of misfolded proteins. In Pleurastrum terricola (Filamentous green alga), this protein is ATP-dependent Clp protease proteolytic subunit.